We begin with the raw amino-acid sequence, 767 residues long: Mst2 complex subunit nto1 (767 aa).

A PHD-type 1 zinc finger spans residues 194-244 (DGRCVICNEAECENSNAIVFCDNCNTSVHQNCYGIPFVPEGQWFCKKCLLA). Residues 248–281 (VICCAFCPDRDGAFCTTLDGRWCHTICAIAIPEI) form a C2HC pre-PHD-type zinc finger. The PHD-type 2 zinc finger occupies 305-363 (LVCCICKLRWGTCVQCSDKNCYAAYHITCARRAGFFYKIYSHSASYDSVDMETYCDKHT). Residues 724-752 (VTGQSNHALPNSVTKKNGTKQPYTKNSLP) are compositionally biased toward polar residues. A disordered region spans residues 724–767 (VTGQSNHALPNSVTKKNGTKQPYTKNSLPFNERITRSKAKKNYS).

In terms of assembly, component of the mst2 complex composed of at least eaf6, mst2, nto1, pdp3, ptf1, ptf2 and tfg3.

It is found in the cytoplasm. The protein resides in the nucleus. In terms of biological role, component of the mst2 complex which is a highly specific H3 lysine 14 (H3K14) acetyltransferase that functions together with gcn5 to regulate global levels of H3K14 acetylation (H3K14ac), critical for DNA damage checkpoint activation. The chain is Mst2 complex subunit nto1 (nto1) from Schizosaccharomyces pombe (strain 972 / ATCC 24843) (Fission yeast).